We begin with the raw amino-acid sequence, 168 residues long: Photosystem I assembly protein Ycf3 (168 aa).

TPR repeat units follow at residues 35–68, 72–105, and 120–153; these read AFTYYRDGMSAQSEGNYAEALQNYYEATRLEIDP, SYILYNIGLIHTSNGEHTKALEYYSRALERNPFL, and GEQAIRQGDSEIAEAWSDQAAEYWKQAIALTPGN.

It belongs to the Ycf3 family.

It localises to the plastid. The protein localises to the chloroplast thylakoid membrane. In terms of biological role, essential for the assembly of the photosystem I (PSI) complex. May act as a chaperone-like factor to guide the assembly of the PSI subunits. The sequence is that of Photosystem I assembly protein Ycf3 from Buxus microphylla (Littleleaf boxwood).